We begin with the raw amino-acid sequence, 219 residues long: Adenylate kinase (219 aa).

Residue 10-15 (GAGKGT) coordinates ATP. Residues 30–59 (STGDMLRAAIREGTELGLKAKSVMESGGLV) form an NMP region. AMP is bound by residues threonine 31, arginine 36, 57–59 (GLV), 85–88 (GFPR), and glutamine 92. The tract at residues 122–159 (GRRQHPASGRVYHIEYNPPKVEGKDDVTGEELVQRPDD) is LID. Residues arginine 123 and 132 to 133 (VY) each bind ATP. Residues arginine 156 and arginine 167 each coordinate AMP. Arginine 202 serves as a coordination point for ATP.

This sequence belongs to the adenylate kinase family. As to quaternary structure, monomer.

It is found in the cytoplasm. It catalyses the reaction AMP + ATP = 2 ADP. It participates in purine metabolism; AMP biosynthesis via salvage pathway; AMP from ADP: step 1/1. Its function is as follows. Catalyzes the reversible transfer of the terminal phosphate group between ATP and AMP. Plays an important role in cellular energy homeostasis and in adenine nucleotide metabolism. The chain is Adenylate kinase from Acinetobacter baylyi (strain ATCC 33305 / BD413 / ADP1).